The primary structure comprises 815 residues: Minichromosome loss protein 1 (815 aa).

WD repeat units lie at residues 11-50 (AHTD…EPDS), 53-90 (NHQD…EHTL), 93-132 (RTTL…QIFS), 135-174 (PAKA…LIKF), and 228-267 (ENHS…VVVE). The segment at 306 to 362 (LKEENDPTKPLTSSKSKNRTSKELDDLFGSDDEQSQNVNDLDGNSANEENEFINHDG) is disordered. The span at 340–352 (SQNVNDLDGNSAN) shows a compositional bias: polar residues. The stretch at 517–553 (ENESPVTISLSSSVVLVCTSAGYVRVFSRQGFPISIH) is one WD 6 repeat.

In terms of assembly, interacts with pof3 and pol1.

It is found in the nucleus. Its subcellular location is the chromosome. In terms of biological role, has a role in regulating DNA replication complexes. Acts as a regulator of post DNA replication initiation. Associates with chromatin during G1 and S phases of mitosis. Required for the transcriptional repression of the outer repeats of the centromeric region. Acts as a polymerase alpha replication accessory factor and is important for S-phase DNA damage survival. Plays a role in lagging-strand synthesis and Ozaki fragment processing, in addition to DNA repair. The chain is Minichromosome loss protein 1 (mcl1) from Schizosaccharomyces pombe (strain 972 / ATCC 24843) (Fission yeast).